The following is a 121-amino-acid chain: Protein yippee-like 5 (121 aa).

The Yippee domain maps to 13–110; it reads RLFSCANCDA…LERALVRESE (98 aa). Zn(2+)-binding residues include Cys17, Cys20, Cys73, and Cys76. Ser118 is modified (phosphoserine).

Belongs to the yippee family. In terms of assembly, identified in the CTLH complex that contains GID4, RANBP9 and/or RANBP10, MKLN1, MAEA, RMND5A (or alternatively its paralog RMND5B), GID8, ARMC8, WDR26 and YPEL5. Within this complex, MAEA, RMND5A (or alternatively its paralog RMND5B), GID8, WDR26, and RANBP9 and/or RANBP10 form the catalytic core, while GID4, MKLN1, ARMC8 and YPEL5 have ancillary roles. Interacts with RANBP9 and RANBP10.

Its subcellular location is the nucleus. It localises to the cytoplasm. The protein resides in the cytoskeleton. It is found in the microtubule organizing center. The protein localises to the centrosome. Its subcellular location is the spindle pole. It localises to the midbody. Functionally, component of the CTLH E3 ubiquitin-protein ligase complex that selectively accepts ubiquitin from UBE2H and mediates ubiquitination and subsequent proteasomal degradation of the transcription factor HBP1. Required for normal cell proliferation. The polypeptide is Protein yippee-like 5 (YPEL5) (Macaca fascicularis (Crab-eating macaque)).